The primary structure comprises 229 residues: Heptaprenylglyceryl phosphate synthase (229 aa).

Lysine 12 contributes to the sn-glycerol 1-phosphate binding site. Aspartate 14 and serine 40 together coordinate Mg(2+). Residues tyrosine 159–glycine 164, glycine 189, and glycine 209–asparagine 210 each bind sn-glycerol 1-phosphate.

This sequence belongs to the GGGP/HepGP synthase family. Group I subfamily. As to quaternary structure, homodimer. It depends on Mg(2+) as a cofactor.

The catalysed reaction is sn-glycerol 1-phosphate + all-trans-heptaprenyl diphosphate = 3-heptaprenyl-sn-glycero-1-phosphate + diphosphate. The protein operates within membrane lipid metabolism; glycerophospholipid metabolism. Functionally, prenyltransferase that catalyzes in vivo the transfer of the heptaprenyl moiety of heptaprenyl pyrophosphate (HepPP; 35 carbon atoms) to the C3 hydroxyl of sn-glycerol-1-phosphate (G1P), producing heptaprenylglyceryl phosphate (HepGP). This reaction is an ether-bond-formation step in the biosynthesis of archaea-type G1P-based membrane lipids found in Bacillales. In Bacillus cytotoxicus (strain DSM 22905 / CIP 110041 / 391-98 / NVH 391-98), this protein is Heptaprenylglyceryl phosphate synthase.